The following is a 167-amino-acid chain: MAHIEKQAGELQEKLIAVNRVSKTVKGGRIFSFTALTVVGDGNGRVGFGYGKAREVPAAIQKAMEKARRAMINVALNSGTLQHPVKGAHTGSRVFMQPASEGTGIIAGGAMRAVLEVAGVHNVLAKAYGSTNPINVVRATIAALEDMKSPEMVAAKRGKSVEEILGK.

Residues 11-74 enclose the S5 DRBM domain; that stretch reads LQEKLIAVNR…EKARRAMINV (64 aa).

This sequence belongs to the universal ribosomal protein uS5 family. Part of the 30S ribosomal subunit. Contacts proteins S4 and S8.

With S4 and S12 plays an important role in translational accuracy. Its function is as follows. Located at the back of the 30S subunit body where it stabilizes the conformation of the head with respect to the body. This chain is Small ribosomal subunit protein uS5, found in Serratia proteamaculans (strain 568).